Consider the following 259-residue polypeptide: Ferritin-3, chloroplastic (259 aa).

The N-terminal 49 residues, 1–49 (MLLKAASTFSLLNIHGEKKDISPLFSSSSSISSPVSSGKSGNLSFPLRA), are a transit peptide targeting the chloroplast. Residues 50-88 (SKSSTTTTSTLSGVVFEPFEEVKKEMDLVPSGQQLSLAR) are extension peptide (EP). The Ferritin-like diiron domain maps to 89-242 (HLYSPECEAA…EYVSQLRRLG (154 aa)). Fe cation is bound by residues Glu-106, Glu-141, His-144, Glu-190, and Gln-224.

It belongs to the ferritin family. In terms of assembly, oligomer of 24 subunits. There are two types of subunits: L (light) chain and H (heavy) chain. The major chain can be light or heavy, depending on the species and tissue type. The functional molecule forms a roughly spherical shell with a diameter of 12 nm and contains a central cavity into which the insoluble mineral iron core is deposited.

The protein resides in the plastid. It localises to the chloroplast. It catalyses the reaction 4 Fe(2+) + O2 + 4 H(+) = 4 Fe(3+) + 2 H2O. In terms of biological role, stores iron in a soluble, non-toxic, readily available form. Important for iron homeostasis. Has ferroxidase activity. Iron is taken up in the ferrous form and deposited as ferric hydroxides after oxidation. In Arabidopsis thaliana (Mouse-ear cress), this protein is Ferritin-3, chloroplastic (FER3).